The chain runs to 265 residues: MDYINAAILGVIEGITEFLPISSTGHLIIAEQWLGHRSDMFNIVIQAGAILAVTIIYWRRLLDLVLGWREPENRDYAAKLIVAFLITAILGLVVKKLGFELPETATPIAWALIIGGIWMIFAEWAAARRPPHKQITWLVAILVGIAQIVAGVFPGTSRSGATIFVALLAGTGNRAAATEFAFLVGIPTMYAASGYELLKTFKDGGAAGEDWTALAIAFVVSTIVAFIAVKWLLAYIRSNRFTLFAIYRIILGVLLLGMTATGMIA.

A run of 7 helical transmembrane segments spans residues 38–58 (SDMF…IIYW), 80–100 (LIVA…LGFE), 107–127 (PIAW…WAAA), 135–155 (ITWL…VFPG), 175–195 (AAAT…ASGY), 213–233 (ALAI…KWLL), and 244–264 (FAIY…TGMI).

Belongs to the UppP family.

It is found in the cell inner membrane. It carries out the reaction di-trans,octa-cis-undecaprenyl diphosphate + H2O = di-trans,octa-cis-undecaprenyl phosphate + phosphate + H(+). Its function is as follows. Catalyzes the dephosphorylation of undecaprenyl diphosphate (UPP). Confers resistance to bacitracin. The protein is Undecaprenyl-diphosphatase of Rhizobium etli (strain ATCC 51251 / DSM 11541 / JCM 21823 / NBRC 15573 / CFN 42).